The chain runs to 207 residues: Twist-related protein 1 (207 aa).

Residues 1–18 (MMQDVSSSPVSPADDSLS) are compositionally biased toward low complexity. The tract at residues 1 to 110 (MMQDVSSSPV…GGGSPQSYEE (110 aa)) is disordered. A compositionally biased stretch (basic residues) spans 34–43 (RGGRKRRSSR). Gly residues-rich tracts occupy residues 46 to 65 (AGGG…GGDE) and 80 to 104 (GCGG…GGGS). Residues 113–164 (TQRVMANVRERQRTQSLNEAFAALRKIIPTLPSDKLSKIQTLKLAARYIDFL) enclose the bHLH domain. Positions 166–196 (QVLQSDELDSKMASCSYVAHERLSYAFSVWR) are sufficient for transactivation activity.

As to quaternary structure, efficient DNA binding requires dimerization with another bHLH protein. Homodimer or heterodimer with E proteins such as TCF3. ID1 binds preferentially to TCF3 but does not interact efficiently with TWIST1 so ID1 levels control the amount of TCF3 available to dimerize with TWIST and thus determine the type of dimer formed.

Its subcellular location is the nucleus. Its function is as follows. Acts as a transcriptional regulator. Inhibits myogenesis by sequestrating E proteins, inhibiting trans-activation by MEF2, and inhibiting DNA-binding by MYOD1 through physical interaction. This interaction probably involves the basic domains of both proteins. Also represses expression of pro-inflammatory cytokines such as TNFA and IL1B. Regulates cranial suture patterning and fusion. Activates transcription as a heterodimer with E proteins. Regulates gene expression differentially, depending on dimer composition. Homodimers induce expression of FGFR2 and POSTN while heterodimers repress FGFR2 and POSTN expression and induce THBS1 expression. Heterodimerization is also required for osteoblast differentiation. Represses the activity of the circadian transcriptional activator: NPAS2-BMAL1 heterodimer. In Cebus capucinus (White-faced sapajou), this protein is Twist-related protein 1 (TWIST1).